The sequence spans 102 residues: Small ribosomal subunit protein uS10 (102 aa).

Belongs to the universal ribosomal protein uS10 family. In terms of assembly, part of the 30S ribosomal subunit.

Involved in the binding of tRNA to the ribosomes. The sequence is that of Small ribosomal subunit protein uS10 from Methanobrevibacter smithii (strain ATCC 35061 / DSM 861 / OCM 144 / PS).